The following is a 197-amino-acid chain: MRTATIKRKTKETDIEVAVNLDGSGVSSVATGIGFFDHMLDLLARHSRIDIMVKADGDLHVDYHHTTEDVGIALGQAVKQALGTMAGITRYACAHMPMDETLSRVVIDISGRPMLVFKVEFPRDKIGEFDTELVREWFNAFAVNAGVTLHVETLYGENSHHIAESCFKGLARALRAAVAIDPRAAGEVPSTKGQLGG.

Belongs to the imidazoleglycerol-phosphate dehydratase family.

It localises to the cytoplasm. It catalyses the reaction D-erythro-1-(imidazol-4-yl)glycerol 3-phosphate = 3-(imidazol-4-yl)-2-oxopropyl phosphate + H2O. Its pathway is amino-acid biosynthesis; L-histidine biosynthesis; L-histidine from 5-phospho-alpha-D-ribose 1-diphosphate: step 6/9. The protein is Imidazoleglycerol-phosphate dehydratase of Nitrobacter hamburgensis (strain DSM 10229 / NCIMB 13809 / X14).